Here is a 564-residue protein sequence, read N- to C-terminus: Rhotekin (564 aa).

R14 carries the post-translational modification Omega-N-methylarginine. One can recognise an REM-1 domain in the interval 17–98 (ALEMEFKRGR…LQRRKEAQVL (82 aa)). Phosphoserine occurs at positions 30 and 106. Asymmetric dimethylarginine is present on R230. S232 carries the phosphoserine modification. Residues 309-416 (QPTASGALRV…WMEALWQLFF (108 aa)) enclose the PH domain. Residues 518 to 564 (TFSLDAAPADHSLGPSRSVAPLPPQRSPKSRGFYSKSQLGPWLQSPV) form a disordered region. A phosphoserine mark is found at S520, S529, and S544.

In terms of assembly, interacts via its C-terminal region with the TAX1BP3 PDZ domain. This interaction facilitates Rho-mediated activation of the c-Fos serum response element (SRE). Interacts with SEPT9. Specifically binds to GTP-bound RHOA, RHOB and RHOC and inhibits their GTPase activity. Abundantly expressed in brain and kidney. Weakly expressed in lung, testis, skeletal muscle, heart and thymus.

Functionally, mediates Rho signaling to activate NF-kappa-B and may confer increased resistance to apoptosis to cells in gastric tumorigenesis. May play a novel role in the organization of septin structures. In Mus musculus (Mouse), this protein is Rhotekin.